A 1084-amino-acid chain; its full sequence is Autophagy-related protein 11 (1084 aa).

Coiled-coil stretches lie at residues 585 to 739 (VQNL…LTES) and 847 to 879 (VIRR…TNDK). Disordered stretches follow at residues 925 to 961 (SMIP…NMNR) and 973 to 1007 (NIGS…STNA). 2 stretches are compositionally biased toward low complexity: residues 940-949 (SNTNNSNPSS) and 973-993 (NIGS…NGNN). Polar residues predominate over residues 994 to 1007 (KPETNIDTTSSTNA).

This sequence belongs to the ATG11 family. In terms of assembly, homodimer and potential homooligomers. Interacts with ATG1 kinase and the ATG19 and ATG34 cargo protein transporters. Interacts with ATG9, ATG17 and ATG20.

Its subcellular location is the preautophagosomal structure membrane. The protein localises to the vacuole membrane. Its function is as follows. Involved in cytoplasm to vacuole transport (Cvt), pexophagy, mitophagy and nucleophagy. Recruits mitochondria for their selective degradation via autophagy (mitophagy) during starvation, through its interaction with ATG32. Works as scaffold proteins that recruit ATG proteins to the pre-autophagosome (PAS), the site of vesicle/autophagosome formation. Required for ATG9 anterograde transport from the mitochondria to the PAS. Also recruits the ATG19-prAPE1 complex to the PAS. Required for the Cvt vesicles completion. This is Autophagy-related protein 11 from Kluyveromyces marxianus (strain DMKU3-1042 / BCC 29191 / NBRC 104275) (Yeast).